Consider the following 583-residue polypeptide: Vivapain-1 (583 aa).

At 1–34 (MAQDIKIMNLTKSSLEALNRNQMLSKKSSRKILK) the chain is on the cytoplasmic side. Residues 1-338 (MAQDIKIMNL…SSSGANLLAD (338 aa)) constitute a propeptide, activation peptide. A helical; Signal-anchor for type II membrane protein membrane pass occupies residues 35-55 (ICMYAILTFAMCGVVLICLTA). Residues 56 to 583 (MSNSDGSLTQ…IGVEVFYPIL (528 aa)) lie on the Lumenal side of the membrane. A compositionally biased stretch (polar residues) spans 62 to 82 (SLTQSGSHNQSGSLKGLSSTP). 2 disordered regions span residues 62–83 (SLTQ…STPG) and 104–125 (PHGN…ALPN). Asparagine 70 carries an N-linked (GlcNAc...) asparagine glycan. Residues 106 to 119 (GNRDPTGDDVEKPA) are compositionally biased toward basic and acidic residues. Asparagine 195 and asparagine 272 each carry an N-linked (GlcNAc...) asparagine glycan. 3 disulfide bridges follow: cysteine 360-cysteine 402, cysteine 395-cysteine 435, and cysteine 420-cysteine 440. Cysteine 363 is an active-site residue. Asparagine 381 carries an N-linked (GlcNAc...) asparagine glycan. 2 N-linked (GlcNAc...) asparagine glycosylation sites follow: asparagine 486 and asparagine 494. The cysteines at positions 489 and 572 are disulfide-linked. Residues histidine 495 and asparagine 547 contribute to the active site.

It belongs to the peptidase C1 family.

The protein localises to the membrane. Functionally, cysteine protease. The protein is Vivapain-1 of Plasmodium vivax (strain Salvador I).